Here is a 451-residue protein sequence, read N- to C-terminus: METNQILETIRMIEEEKLDIRTITMGISLLDCMDGDGEVARKKIYQKIVTKARNLVAVGEAIESEFGIPIINKRISVTPIAIIAGSSADTDYVEFAKTLDAAAKEVGVNFIGGYSALVQKGYTKGDEILIRSIPQALAQTERVCSSVNVGSTRTGINMDAVRQMGEVIKETADLTADTQGLGCAKLVVFANAVEDNPFMAGAFHGVGEADCVINVGVSGPGVVKRAIEKVKGEPFDIVAETVKQTAFKITRMGQLVGQVASEKLGVPFGIVDLSLAPTPAIGDSVAHILEEMGLEMVGTHGTTAALALLNDAVKKGGVMACGHVGGLSGAFIPVSEDAGMIEAVQQGALNLEKLEAMTAICSVGLDMIAVPGDTTAETLAAMIADEAAIGVINNKTTAVRVIPASGTKVGDMVEFGGLLGTAPVMPVNGKSSVDFIARGGRIPAPIHSFKN.

It belongs to the UPF0210 family. Homodimer.

This is UPF0210 protein LMOf2365_0563 from Listeria monocytogenes serotype 4b (strain F2365).